A 379-amino-acid chain; its full sequence is Succinyl-diaminopimelate desuccinylase (379 aa).

Histidine 70 provides a ligand contact to Zn(2+). Aspartate 72 is a catalytic residue. Aspartate 103 contacts Zn(2+). The active-site Proton acceptor is glutamate 137. Glutamate 138, glutamate 166, and histidine 352 together coordinate Zn(2+).

The protein belongs to the peptidase M20A family. DapE subfamily. In terms of assembly, homodimer. Zn(2+) serves as cofactor. Requires Co(2+) as cofactor.

It carries out the reaction N-succinyl-(2S,6S)-2,6-diaminopimelate + H2O = (2S,6S)-2,6-diaminopimelate + succinate. Its pathway is amino-acid biosynthesis; L-lysine biosynthesis via DAP pathway; LL-2,6-diaminopimelate from (S)-tetrahydrodipicolinate (succinylase route): step 3/3. In terms of biological role, catalyzes the hydrolysis of N-succinyl-L,L-diaminopimelic acid (SDAP), forming succinate and LL-2,6-diaminopimelate (DAP), an intermediate involved in the bacterial biosynthesis of lysine and meso-diaminopimelic acid, an essential component of bacterial cell walls. The protein is Succinyl-diaminopimelate desuccinylase of Shewanella putrefaciens (strain CN-32 / ATCC BAA-453).